Reading from the N-terminus, the 447-residue chain is Probable glycosyltransferase 7 (447 aa).

Positions 1-31 are disordered; it reads MRATTGARHLHPPWRRGLRHHRQSTMPPRAS. Residues 1–37 lie on the Cytoplasmic side of the membrane; the sequence is MRATTGARHLHPPWRRGLRHHRQSTMPPRASRGRLAD. The segment covering 8-23 has biased composition (basic residues); the sequence is RHLHPPWRRGLRHHRQ. Residues 38-60 traverse the membrane as a helical; Signal-anchor for type II membrane protein segment; sequence AALFTAGAVLGSVLLLTLASPFS. The Lumenal segment spans residues 61–447; it reads SSSSPSSGVG…LPFDHPTQTA (387 aa). Asn285 and Asn329 each carry an N-linked (GlcNAc...) asparagine glycan.

The protein belongs to the glycosyltransferase 34 family.

The protein resides in the golgi apparatus membrane. Probable glycosyltransferase that may be involved in the biosynthesis of xyloglucan. In Oryza sativa subsp. indica (Rice), this protein is Probable glycosyltransferase 7.